We begin with the raw amino-acid sequence, 287 residues long: NAD kinase (287 aa).

The Proton acceptor role is filled by D66. NAD(+)-binding positions include 66-67, 137-138, R148, R165, D167, and 178-183; these read DG, ND, and TAYSMS.

This sequence belongs to the NAD kinase family. A divalent metal cation serves as cofactor.

Its subcellular location is the cytoplasm. The enzyme catalyses NAD(+) + ATP = ADP + NADP(+) + H(+). Its function is as follows. Involved in the regulation of the intracellular balance of NAD and NADP, and is a key enzyme in the biosynthesis of NADP. Catalyzes specifically the phosphorylation on 2'-hydroxyl of the adenosine moiety of NAD to yield NADP. The polypeptide is NAD kinase (Chlorobium limicola (strain DSM 245 / NBRC 103803 / 6330)).